The following is a 504-amino-acid chain: L-amino-acid oxidase (504 aa).

A signal peptide spans 1–18 (MNVFFMFSLLFLATLGSC). Cysteines 28 and 191 form a disulfide. Residues 61–62 (MS), 81–82 (EA), Arg-89, and 105–108 (GPMR) contribute to the FAD site. Residue Arg-108 coordinates substrate. The N-linked (GlcNAc...) asparagine glycan is linked to Asn-190. His-241 lines the substrate pocket. FAD is bound at residue Val-279. An intrachain disulfide couples Cys-349 to Cys-430. A glycan (N-linked (GlcNAc...) asparagine) is linked at Asn-379. A substrate-binding site is contributed by Tyr-390. FAD is bound by residues Glu-475 and 482-487 (GWIDST). 482–483 (GW) is a binding site for substrate.

It belongs to the flavin monoamine oxidase family. FIG1 subfamily. As to quaternary structure, homodimer; non-covalently linked. FAD serves as cofactor. Expressed by the venom gland.

The protein localises to the secreted. The catalysed reaction is an L-alpha-amino acid + O2 + H2O = a 2-oxocarboxylate + H2O2 + NH4(+). The enzyme catalyses L-leucine + O2 + H2O = 4-methyl-2-oxopentanoate + H2O2 + NH4(+). It catalyses the reaction L-phenylalanine + O2 + H2O = 3-phenylpyruvate + H2O2 + NH4(+). It carries out the reaction L-tryptophan + O2 + H2O = indole-3-pyruvate + H2O2 + NH4(+). The catalysed reaction is L-methionine + O2 + H2O = 4-methylsulfanyl-2-oxobutanoate + H2O2 + NH4(+). The enzyme catalyses L-tyrosine + O2 + H2O = 3-(4-hydroxyphenyl)pyruvate + H2O2 + NH4(+). Catalyzes an oxidative deamination of predominantly hydrophobic and aromatic L-amino acids, thus producing hydrogen peroxide that may contribute to the diverse toxic effects of this enzyme. Is highly active on L-Tyr followed by L-Phe, L-Met, L-Leu, L-Trp, and weakly active on L-Ile, L-Arg, L-Val, L-Lys, and L-Ala. Inhibits ADP- and collagen-induced platelet aggregation. This inhibition is inhibited by catalase, indicating the importance of generated H(2)O(2) for the inhibitory effect. This effect on platelets among snake L-amino-acid oxidases is however controversial, since some of them induce aggregation, whereas the other inhibit agonist-induced aggregation. In vivo, this enzyme induces a rapid, substantial and reversible increase in the paw volume of mice (edema). In addition, myofibrosis, and inflammatory cell infiltration on the paw tissue are also observed. In Daboia russelii (Russel's viper), this protein is L-amino-acid oxidase.